The primary structure comprises 305 residues: tRNA dimethylallyltransferase (305 aa).

An ATP-binding site is contributed by G15–S22. Residue T17–S22 participates in substrate binding. Interaction with substrate tRNA stretches follow at residues D40 to Q43 and Q164 to R168.

Belongs to the IPP transferase family. Monomer. Mg(2+) is required as a cofactor.

It catalyses the reaction adenosine(37) in tRNA + dimethylallyl diphosphate = N(6)-dimethylallyladenosine(37) in tRNA + diphosphate. Catalyzes the transfer of a dimethylallyl group onto the adenine at position 37 in tRNAs that read codons beginning with uridine, leading to the formation of N6-(dimethylallyl)adenosine (i(6)A). The polypeptide is tRNA dimethylallyltransferase (Sinorhizobium medicae (strain WSM419) (Ensifer medicae)).